The primary structure comprises 440 residues: Trigger factor (440 aa).

Residues 163 to 248 (GDTVNIDFDG…INEIKYKNVP (86 aa)) form the PPIase FKBP-type domain.

Belongs to the FKBP-type PPIase family. Tig subfamily.

The protein localises to the cytoplasm. The catalysed reaction is [protein]-peptidylproline (omega=180) = [protein]-peptidylproline (omega=0). Its function is as follows. Involved in protein export. Acts as a chaperone by maintaining the newly synthesized protein in an open conformation. Functions as a peptidyl-prolyl cis-trans isomerase. In Staphylococcus carnosus (strain TM300), this protein is Trigger factor.